Here is a 292-residue protein sequence, read N- to C-terminus: Transcription antiterminator LacT (292 aa).

PRD domains are found at residues 66-170 (NIPI…DDGE) and 172-284 (VFGK…APAQ).

It belongs to the transcriptional antiterminator BglG family.

In terms of biological role, mediates positive regulation of the lac operon by functioning as an antiterminator factor of transcription. In Lacticaseibacillus casei (Lactobacillus casei), this protein is Transcription antiterminator LacT (lacT).